A 455-amino-acid polypeptide reads, in one-letter code: Probable galactarate/D-glucarate transporter GudP (455 aa).

Helical transmembrane passes span Trp19–Leu39, Tyr59–Leu79, Ile87–Phe107, Phe108–Glu128, Ala153–Leu173, Phe177–Trp197, Ile253–Phe273, Gly289–Val309, Leu320–Val340, Trp348–Trp368, Leu386–Val406, and Gly414–Val434.

Belongs to the major facilitator superfamily. Phthalate permease family.

The protein localises to the cell membrane. It catalyses the reaction galactarate(in) + H(+)(in) = galactarate(out) + H(+)(out). The enzyme catalyses D-glucarate(in) + H(+)(in) = D-glucarate(out) + H(+)(out). In terms of biological role, probably involved in the uptake of galactarate and/or D-glucarate. This is Probable galactarate/D-glucarate transporter GudP from Bacillus subtilis (strain 168).